Here is a 297-residue protein sequence, read N- to C-terminus: Beta-glucoside kinase (297 aa).

Position 5–11 (5–11 (AFDIGGT)) interacts with ATP.

The protein belongs to the ROK (NagC/XylR) family. As to quaternary structure, homotetramer.

It carries out the reaction D-cellobiose + ATP = 6-phospho-beta-D-glucosyl-(1-&gt;4)-D-glucose + ADP + H(+). Is inhibited by N-ethylmaleimide in vitro, but ATP affords considerable protection against the inhibitor. Catalyzes the ATP-dependent phosphorylation of a wide variety of beta-D-glucosides, to produce 6-phospho-beta-D-glucosides including cellobiose-6'-P, gentiobiose-6'-P, cellobiitol-6-P, salicin-6-P, and arbutin-6-P. Is not able to phosphorylate alpha-D-glucosides. May have a dual role of kinase and transcriptional regulator of the cellobiose-PTS operon. The sequence is that of Beta-glucoside kinase (bglK) from Klebsiella pneumoniae.